The following is a 253-amino-acid chain: 5'/3'-nucleotidase SurE (253 aa).

A divalent metal cation is bound by residues aspartate 8, aspartate 9, serine 39, and asparagine 92.

The protein belongs to the SurE nucleotidase family. A divalent metal cation is required as a cofactor.

It is found in the cytoplasm. The catalysed reaction is a ribonucleoside 5'-phosphate + H2O = a ribonucleoside + phosphate. It carries out the reaction a ribonucleoside 3'-phosphate + H2O = a ribonucleoside + phosphate. It catalyses the reaction [phosphate](n) + H2O = [phosphate](n-1) + phosphate + H(+). In terms of biological role, nucleotidase with a broad substrate specificity as it can dephosphorylate various ribo- and deoxyribonucleoside 5'-monophosphates and ribonucleoside 3'-monophosphates with highest affinity to 3'-AMP. Also hydrolyzes polyphosphate (exopolyphosphatase activity) with the preference for short-chain-length substrates (P20-25). Might be involved in the regulation of dNTP and NTP pools, and in the turnover of 3'-mononucleotides produced by numerous intracellular RNases (T1, T2, and F) during the degradation of various RNAs. The protein is 5'/3'-nucleotidase SurE of Serratia proteamaculans (strain 568).